The primary structure comprises 443 residues: ATP-dependent protease ATPase subunit HslU (443 aa).

ATP-binding positions include Ile18, 60–65 (GVGKTE), Asp256, Glu321, and Arg393.

The protein belongs to the ClpX chaperone family. HslU subfamily. A double ring-shaped homohexamer of HslV is capped on each side by a ring-shaped HslU homohexamer. The assembly of the HslU/HslV complex is dependent on binding of ATP.

Its subcellular location is the cytoplasm. ATPase subunit of a proteasome-like degradation complex; this subunit has chaperone activity. The binding of ATP and its subsequent hydrolysis by HslU are essential for unfolding of protein substrates subsequently hydrolyzed by HslV. HslU recognizes the N-terminal part of its protein substrates and unfolds these before they are guided to HslV for hydrolysis. This is ATP-dependent protease ATPase subunit HslU from Buchnera aphidicola subsp. Schizaphis graminum (strain Sg).